A 95-amino-acid polypeptide reads, in one-letter code: UPF0213 protein YPK_3712 (95 aa).

The region spanning 4–79 is the GIY-YIG domain; sequence SLWHLYLLRT…KQLSKQQKEK (76 aa).

The protein belongs to the UPF0213 family.

This Yersinia pseudotuberculosis serotype O:3 (strain YPIII) protein is UPF0213 protein YPK_3712.